Reading from the N-terminus, the 148-residue chain is MDVLHAHDLYDEQLIDRVGDAVNEDAGDDLDTLVDGQQQQQRVGFNRQMDILLDAPQEPPLGVFPAQGGPNGPPRLRKKRSFYTMTKPTPPCQSQEPEMCLLMASVTRAMRHVREDQRGEYFANYLVENMTSQNYPNGVGLPQHWGQL.

The disordered stretch occupies residues 56-78; it reads PQEPPLGVFPAQGGPNGPPRLRK. N-linked (GlcNAc...) asparagine glycosylation occurs at N129.

This sequence belongs to the male-specific scotti family.

Functionally, post-meiotically transcribed gene that has a role in late spermiogenesis; required for actin cone progression during spermatid individualization. This Drosophila sechellia (Fruit fly) protein is Male-specific protein scotti.